The primary structure comprises 312 residues: D-alanine--D-alanine ligase (312 aa).

The ATP-grasp domain maps to 103–303; the sequence is KQQLVPHGIR…YADLVQAIVD (201 aa). 130–186 provides a ligand contact to ATP; it reads MPRPYVLKPVNEGSSVGVAIIKERDNHGVPIHRDSHGPWQTFATLLAEPFIRGRELT. Mg(2+) is bound by residues Asp-254, Glu-270, and Asn-272.

Belongs to the D-alanine--D-alanine ligase family. It depends on Mg(2+) as a cofactor. Mn(2+) is required as a cofactor.

Its subcellular location is the cytoplasm. The enzyme catalyses 2 D-alanine + ATP = D-alanyl-D-alanine + ADP + phosphate + H(+). It participates in cell wall biogenesis; peptidoglycan biosynthesis. Cell wall formation. The sequence is that of D-alanine--D-alanine ligase from Rhizorhabdus wittichii (strain DSM 6014 / CCUG 31198 / JCM 15750 / NBRC 105917 / EY 4224 / RW1) (Sphingomonas wittichii).